Here is a 697-residue protein sequence, read N- to C-terminus: Portal protein (697 aa).

Positions 633–697 are disordered; that stretch reads MSREAAGGVP…RRAGGPYGFH (65 aa). Positions 664 to 689 are enriched in basic and acidic residues; sequence ITADEERRGPERVGRFRNGGPDDPRR.

Belongs to the herpesviridae portal protein family. Homododecamerizes. Interacts with terminase subunits TRM1 and TRM3.

It localises to the virion. It is found in the host nucleus. Its function is as follows. Forms a portal in the viral capsid through which viral DNA is translocated during DNA packaging. Assembles as a dodecamer at a single fivefold axe of the T=16 icosahedric capsid. Binds to the molecular motor that translocates the viral DNA, termed terminase. This is Portal protein (UL104) from Homo sapiens (Human).